Consider the following 932-residue polypeptide: MISLNKKLVLLVGVIFHVAFMWSIFDIYFVSPLIHGMKHHQSTATPPAKRLFLIVGDGLRADKAFEKVRHPTTGESEYLAPFLRSKVMSDATFGISHTRMPTESRPGHVALIAGFYEDVSAVTKGWKENPVDFDSVFNQSRHTYSLGSPDILPMFKHGAEDQSRIDAIMYGHDFEDFTKGSIELDAFVFDHLDEIFDKSKTNKTLDDQLRSDKTVFFLHLLGIDTAGHSYRPYSAEYYDNIKYIDENIEKLVDKVNKFYNDDEQTAWVFTADHGMSDWGSHGDGHPDNTRTPLIAWGAGVNKPIPAFEDKGNHDDYSEVWDLPVKRNDVNQADIASLMSYLVGLNYPSNSVGELPLAFVNATSETKALAIRNNALALVEQYLVKEEQQKGSQIIFKPYPPLSDAGKTIDERLAHIDELIAQGLDQESIVASEELMTYAITGLKYLQTYNWLFLRTLVTIGFFGWIAVAFCSYLLAFVVQSDKPFTTSLPLKGVAYVALAILSGFFVFQKSPLHYHLYAVFPVVFWEAVLQRRTAVAEGISILARRSTSKAPALAAILDIGLSLVLLEAIVYGYFHREIFSVCFGLATLWPFVHNFTVAKREWPTTLAWVVMCAIMSSFTLLEVVKVESIEQILLSGALMLVIGLVFTIHLQRKLALAASTVCVLFAQILLVVATMYFTRESVESLTARNGLPLFSQVGGWISLLLSLAVPFLHFLGSDAKDYRLRLLIIFLAFGPTFVILTISWEGFFYVCFFAILVIWIELETQMRDARVTPQTRADLTPGDFRMALFTFFMSQIGFFGIGNIASISSFSLDSVYRLIPVFDPFSMGALLMFKILVPFAVLSACLGILNLKLGVPPSALFSMVLCVSDILTLNFFYLVVDEGSWLDIGTGISHYCIASGLSLFMMVLEYLSGVLVAGVTIAPHVSKIKKDM.

The Cytoplasmic portion of the chain corresponds to 1–8 (MISLNKKL). The helical transmembrane segment at 9–29 (VLLVGVIFHVAFMWSIFDIYF) threads the bilayer. The Lumenal segment spans residues 30–456 (VSPLIHGMKH…TYNWLFLRTL (427 aa)). Asn138, Asn202, and Asn360 each carry an N-linked (GlcNAc...) asparagine glycan. Residues 457–477 (VTIGFFGWIAVAFCSYLLAFV) form a helical membrane-spanning segment. The Cytoplasmic portion of the chain corresponds to 478 to 486 (VQSDKPFTT). Residues 487-507 (SLPLKGVAYVALAILSGFFVF) form a helical membrane-spanning segment. The Lumenal portion of the chain corresponds to 508-509 (QK). The helical transmembrane segment at 510-530 (SPLHYHLYAVFPVVFWEAVLQ) threads the bilayer. Over 531-551 (RRTAVAEGISILARRSTSKAP) the chain is Cytoplasmic. Residues 552–572 (ALAAILDIGLSLVLLEAIVYG) form a helical membrane-spanning segment. The Lumenal segment spans residues 573-577 (YFHRE). A helical membrane pass occupies residues 578–598 (IFSVCFGLATLWPFVHNFTVA). Over 599 to 603 (KREWP) the chain is Cytoplasmic. Residues 604–624 (TTLAWVVMCAIMSSFTLLEVV) form a helical membrane-spanning segment. Over 625–627 (KVE) the chain is Lumenal. Residues 628–648 (SIEQILLSGALMLVIGLVFTI) form a helical membrane-spanning segment. Residues 649 to 653 (HLQRK) lie on the Cytoplasmic side of the membrane. Residues 654–674 (LALAASTVCVLFAQILLVVAT) form a helical membrane-spanning segment. At 675–696 (MYFTRESVESLTARNGLPLFSQ) the chain is on the lumenal side. A helical transmembrane segment spans residues 697-717 (VGGWISLLLSLAVPFLHFLGS). The Cytoplasmic segment spans residues 718 to 737 (DAKDYRLRLLIIFLAFGPTF). A helical transmembrane segment spans residues 738–758 (VILTISWEGFFYVCFFAILVI). Residues 759 to 786 (WIELETQMRDARVTPQTRADLTPGDFRM) are Lumenal-facing. Residues 787–807 (ALFTFFMSQIGFFGIGNIASI) traverse the membrane as a helical segment. The Cytoplasmic segment spans residues 808–828 (SSFSLDSVYRLIPVFDPFSMG). Residues 829-849 (ALLMFKILVPFAVLSACLGIL) form a helical membrane-spanning segment. At 850–859 (NLKLGVPPSA) the chain is on the lumenal side. A helical membrane pass occupies residues 860–880 (LFSMVLCVSDILTLNFFYLVV). Residues 881 to 900 (DEGSWLDIGTGISHYCIASG) are Cytoplasmic-facing. Residues 901 to 921 (LSLFMMVLEYLSGVLVAGVTI) form a helical membrane-spanning segment. Residues 922–932 (APHVSKIKKDM) lie on the Lumenal side of the membrane.

This sequence belongs to the PIGG/PIGN/PIGO family. PIGN subfamily.

The protein localises to the endoplasmic reticulum membrane. Its pathway is glycolipid biosynthesis; glycosylphosphatidylinositol-anchor biosynthesis. In terms of biological role, ethanolamine phosphate transferase involved in glycosylphosphatidylinositol-anchor biosynthesis. Transfers ethanolamine phosphate to the first alpha-1,4-linked mannose of the glycosylphosphatidylinositol precursor of GPI-anchor. The protein is GPI ethanolamine phosphate transferase 1 (MCD4) of Yarrowia lipolytica (strain CLIB 122 / E 150) (Yeast).